The sequence spans 315 residues: Olfactory receptor 8J3 (315 aa).

The Extracellular portion of the chain corresponds to 1–25 (MAPENFTRVTEFILTGVSSCPELQI). N-linked (GlcNAc...) asparagine glycosylation is present at Asn-5. A helical membrane pass occupies residues 26–46 (PLFLVFLVLYVLTMAGNLGII). At 47 to 54 (TLTSVDSR) the chain is on the cytoplasmic side. A helical transmembrane segment spans residues 55–75 (LQNPMYFFLRHLAIINLGNST). Topologically, residues 76–99 (VIAPKMLMNFLVKKKTTSFYECAT) are extracellular. Cys-97 and Cys-189 form a disulfide bridge. The chain crosses the membrane as a helical span at residues 100–120 (QLGGFLFFIVSEVMMLAVMAY). Residues 121–139 (DRYVAICNPLLYMVVVSRR) lie on the Cytoplasmic side of the membrane. The chain crosses the membrane as a helical span at residues 140-160 (LCLLLVSLTYLYGFSTAIVVS). At 161–197 (PCIFSVSYCSSNIINHFYCDIAPLLALSCSDTYIPET) the chain is on the extracellular side. The helical transmembrane segment at 198–217 (IVFISAATNLVFSMITVLVS) threads the bilayer. The Cytoplasmic portion of the chain corresponds to 218–237 (YFNIVLSILRIRSPEGRKKA). A helical membrane pass occupies residues 238–258 (FSTCASHMIAVTVFYGTMLFM). Over 259-271 (YLQPQTNHSLDTD) the chain is Extracellular. N-linked (GlcNAc...) asparagine glycosylation occurs at Asn-265. The chain crosses the membrane as a helical span at residues 272–292 (KMASVFYTLVIPMLNPLIYSL). Over 293-315 (RNNDVNVALKKFMENPCYSFKSM) the chain is Cytoplasmic.

The protein belongs to the G-protein coupled receptor 1 family.

Its subcellular location is the cell membrane. In terms of biological role, odorant receptor. In Homo sapiens (Human), this protein is Olfactory receptor 8J3 (OR8J3).